Reading from the N-terminus, the 436-residue chain is GTPase Der (436 aa).

EngA-type G domains are found at residues 4–167 (PVVA…PKEE) and 176–351 (VKFS…DNHS). GTP-binding positions include 10–17 (GRPNVGKS), 57–61 (DTGGI), 119–122 (NKVD), 182–189 (GRPNVGKS), 229–233 (DTAGM), and 294–297 (NKWD). In terms of domain architecture, KH-like spans 352 to 436 (LRVQSSMLND…PIRVIARKRK (85 aa)).

This sequence belongs to the TRAFAC class TrmE-Era-EngA-EngB-Septin-like GTPase superfamily. EngA (Der) GTPase family. Associates with the 50S ribosomal subunit.

In terms of biological role, GTPase that plays an essential role in the late steps of ribosome biogenesis. This Listeria innocua serovar 6a (strain ATCC BAA-680 / CLIP 11262) protein is GTPase Der.